We begin with the raw amino-acid sequence, 359 residues long: Nicotinate-nucleotide--dimethylbenzimidazole phosphoribosyltransferase (359 aa).

The active-site Proton acceptor is the E318.

The protein belongs to the CobT family. Homodimer.

It carries out the reaction 5,6-dimethylbenzimidazole + nicotinate beta-D-ribonucleotide = alpha-ribazole 5'-phosphate + nicotinate + H(+). It participates in nucleoside biosynthesis; alpha-ribazole biosynthesis; alpha-ribazole from 5,6-dimethylbenzimidazole: step 1/2. Catalyzes the synthesis of alpha-ribazole-5'-phosphate from nicotinate mononucleotide (NAMN) and 5,6-dimethylbenzimidazole (DMB). The protein is Nicotinate-nucleotide--dimethylbenzimidazole phosphoribosyltransferase of Escherichia coli O17:K52:H18 (strain UMN026 / ExPEC).